Consider the following 822-residue polypeptide: Endonuclease MutS2 (822 aa).

348–355 contributes to the ATP binding site; it reads GPNTGGKT. The tract at residues 707–737 is disordered; sequence SLNGKKVEPPPKSEPVPKKVKAEPPATEAKS. The segment covering 709–728 has biased composition (basic and acidic residues); it reads NGKKVEPPPKSEPVPKKVKA. Residues 749-822 form the Smr domain; the sequence is LDCRGDRLER…GAGVTIAYLR (74 aa).

This sequence belongs to the DNA mismatch repair MutS family. MutS2 subfamily. In terms of assembly, homodimer. Binds to stalled ribosomes, contacting rRNA.

Endonuclease that is involved in the suppression of homologous recombination and thus may have a key role in the control of bacterial genetic diversity. In terms of biological role, acts as a ribosome collision sensor, splitting the ribosome into its 2 subunits. Detects stalled/collided 70S ribosomes which it binds and splits by an ATP-hydrolysis driven conformational change. Acts upstream of the ribosome quality control system (RQC), a ribosome-associated complex that mediates the extraction of incompletely synthesized nascent chains from stalled ribosomes and their subsequent degradation. Probably generates substrates for RQC. The protein is Endonuclease MutS2 of Synechocystis sp. (strain ATCC 27184 / PCC 6803 / Kazusa).